The chain runs to 183 residues: Cuticle protein 2 (183 aa).

Positions 1–15 are cleaved as a signal peptide; the sequence is MKLIVVAALIGVCAG. Residues 58–121 enclose the Chitin-binding type R&amp;R domain; the sequence is SQGFQYVYDT…AQGAHLPTPP (64 aa).

The sequence is that of Cuticle protein 2 from Lonomia obliqua (Moth).